Reading from the N-terminus, the 503-residue chain is Probable cytosol aminopeptidase (503 aa).

Mn(2+)-binding residues include lysine 270 and aspartate 275. Lysine 282 is an active-site residue. Residues aspartate 293, aspartate 352, and glutamate 354 each coordinate Mn(2+). Arginine 356 is an active-site residue.

Belongs to the peptidase M17 family. Requires Mn(2+) as cofactor.

It is found in the cytoplasm. The enzyme catalyses Release of an N-terminal amino acid, Xaa-|-Yaa-, in which Xaa is preferably Leu, but may be other amino acids including Pro although not Arg or Lys, and Yaa may be Pro. Amino acid amides and methyl esters are also readily hydrolyzed, but rates on arylamides are exceedingly low.. It carries out the reaction Release of an N-terminal amino acid, preferentially leucine, but not glutamic or aspartic acids.. Its function is as follows. Presumably involved in the processing and regular turnover of intracellular proteins. Catalyzes the removal of unsubstituted N-terminal amino acids from various peptides. The sequence is that of Probable cytosol aminopeptidase from Shigella boydii serotype 4 (strain Sb227).